Reading from the N-terminus, the 215-residue chain is Sodium channel regulatory subunit beta-3 (215 aa).

The signal sequence occupies residues 1–22 (MPAFNRLFPLVSLVLIYWASVC). Residues 23–156 (FPVCVEVPSE…EEAGEDFTSV (134 aa)) are Extracellular-facing. One can recognise an Ig-like C2-type domain in the interval 24-138 (PVCVEVPSET…EAHRPFVKTT (115 aa)). Intrachain disulfides connect cysteine 26–cysteine 48 and cysteine 45–cysteine 120. Asparagine 95, asparagine 109, asparagine 113, and asparagine 121 each carry an N-linked (GlcNAc...) asparagine glycan. Residues 157 to 178 (VSEIMMYILLVFLTLWLLIEMI) traverse the membrane as a helical segment. Topologically, residues 179 to 215 (YCYRKVSKAEEAAQENASDYLAIPSENKENSAVPVEE) are cytoplasmic.

It belongs to the sodium channel auxiliary subunit SCN3B (TC 8.A.17) family. As to quaternary structure, a voltage-gated sodium (Nav) channel consists of an ion-conducting pore-forming alpha subunit functional on its own that is regulated by one or more beta subunits. Forms homodimers and homotrimers. SCN3B is non-covalently associated with alpha subunits and induces the formation of alpha subunit oligomers, including trimers. Interacts with SCN5A/Nav1.5; regulatory subunit of SCN5A/Nav1.5. Interacts with SCN7A/Nav2.1; probable regulatory subunit of SCN7A/Nav2.1. Interacts with SCN10A; regulatory subunit of SCN10A/Nav1.8. Interacts with NFASC; probably involved in targeting the sodium channels to the nodes of Ranvier. Post-translationally, intramolecular disulfide bonds favor the voltage-gated sodium channel oligomeric complex assembly. In terms of processing, N-glycosylated.

The protein localises to the cell membrane. Regulatory subunit of multiple voltage-gated sodium (Nav) channels directly mediating the depolarization of excitable membranes. Navs, also called VGSCs (voltage-gated sodium channels) or VDSCs (voltage-dependent sodium channels), operate by switching between closed and open conformations depending on the voltage difference across the membrane. In the open conformation they allow Na(+) ions to selectively pass through the pore, along their electrochemical gradient. The influx of Na+ ions provokes membrane depolarization, initiating the propagation of electrical signals throughout cells and tissues. The accessory beta subunits participate in localization and functional modulation of the Nav channels. Modulates the activity of SCN2A/Nav1.2, causing a hyperpolarizing shift in the voltage-dependence of inactivation of the channel and increasing the fraction of channels operating in the fast gating mode. Modulates the activity of SCN5A/Nav1.5. Could also regulate the atypical sodium channel SCN7A/Nav2.1. Modulates the activity of SCN10A/Nav1.8, regulating its oligomerization and accelerating the recovery from inactivation. This Macaca fascicularis (Crab-eating macaque) protein is Sodium channel regulatory subunit beta-3.